The chain runs to 456 residues: Glycosyl hydrolase family 109 protein (456 aa).

Residues 1 to 31 (MKLNRRHFLKTAGLSAAGILTSQLPLSSAEA) constitute a signal peptide (tat-type signal). NAD(+) is bound by residues 62 to 63 (QR), Asp84, 133 to 136 (WEWH), 153 to 154 (EV), and Asn182. Substrate-binding positions include Tyr211, Arg230, 242–245 (YPTH), and Tyr324. An NAD(+)-binding site is contributed by Tyr242.

The protein belongs to the Gfo/Idh/MocA family. Glycosyl hydrolase 109 subfamily. It depends on NAD(+) as a cofactor. In terms of processing, predicted to be exported by the Tat system. The position of the signal peptide cleavage has not been experimentally proven.

Its function is as follows. Glycosidase. The sequence is that of Glycosyl hydrolase family 109 protein from Shewanella pealeana (strain ATCC 700345 / ANG-SQ1).